A 206-amino-acid polypeptide reads, in one-letter code: Large ribosomal subunit protein uL4 (206 aa).

A disordered region spans residues Ala-43 to Ser-78. Residues Lys-49–His-58 show a composition bias toward basic and acidic residues. The span at Thr-59–Gly-70 shows a compositional bias: basic residues.

This sequence belongs to the universal ribosomal protein uL4 family. As to quaternary structure, part of the 50S ribosomal subunit.

Its function is as follows. One of the primary rRNA binding proteins, this protein initially binds near the 5'-end of the 23S rRNA. It is important during the early stages of 50S assembly. It makes multiple contacts with different domains of the 23S rRNA in the assembled 50S subunit and ribosome. In terms of biological role, forms part of the polypeptide exit tunnel. The protein is Large ribosomal subunit protein uL4 of Janthinobacterium sp. (strain Marseille) (Minibacterium massiliensis).